A 156-amino-acid polypeptide reads, in one-letter code: Regulatory protein RecX (156 aa).

It belongs to the RecX family.

Its subcellular location is the cytoplasm. Its function is as follows. Modulates RecA activity. In Pseudomonas putida (strain GB-1), this protein is Regulatory protein RecX.